The primary structure comprises 383 residues: Na(+)/H(+) antiporter NhaA (383 aa).

The next 11 helical transmembrane spans lie at 19 to 39 (AGGV…NSPL), 56 to 76 (VLHG…GLEI), 92 to 112 (ILPG…FLAL), 122 to 142 (GWAV…ALLG), 151 to 171 (IFLT…IALF), 174 to 194 (AKLS…LAAL), 212 to 232 (LWGA…ALAL), 255 to 275 (VGYG…FAGL), 292 to 312 (LLFG…WLGF), 326 to 346 (GVAV…ALAF), and 356 to 376 (VKVG…LVLL).

Belongs to the NhaA Na(+)/H(+) (TC 2.A.33) antiporter family.

It is found in the cell inner membrane. The catalysed reaction is Na(+)(in) + 2 H(+)(out) = Na(+)(out) + 2 H(+)(in). Na(+)/H(+) antiporter that extrudes sodium in exchange for external protons. The protein is Na(+)/H(+) antiporter NhaA of Paramagnetospirillum magneticum (strain ATCC 700264 / AMB-1) (Magnetospirillum magneticum).